The following is a 427-amino-acid chain: Enolase (427 aa).

Q163 lines the (2R)-2-phosphoglycerate pocket. E205 (proton donor) is an active-site residue. D242, E285, and D312 together coordinate Mg(2+). (2R)-2-phosphoglycerate is bound by residues K337, R366, S367, and K388. Catalysis depends on K337, which acts as the Proton acceptor.

It belongs to the enolase family. Requires Mg(2+) as cofactor.

It is found in the cytoplasm. The protein localises to the secreted. The protein resides in the cell surface. It carries out the reaction (2R)-2-phosphoglycerate = phosphoenolpyruvate + H2O. Its pathway is carbohydrate degradation; glycolysis; pyruvate from D-glyceraldehyde 3-phosphate: step 4/5. Its function is as follows. Catalyzes the reversible conversion of 2-phosphoglycerate (2-PG) into phosphoenolpyruvate (PEP). It is essential for the degradation of carbohydrates via glycolysis. The polypeptide is Enolase (Xanthobacter autotrophicus (strain ATCC BAA-1158 / Py2)).